The primary structure comprises 71 residues: MGSFSIWHWLIVLVVVLLLFGRGKIPELMGDMAKGIKNFRKGMTDEAEEAKTVEHRTDEPVGEVKQKASKS.

A helical membrane pass occupies residues 1–21 (MGSFSIWHWLIVLVVVLLLFG). The segment at 47–71 (AEEAKTVEHRTDEPVGEVKQKASKS) is disordered. Residues 49-71 (EAKTVEHRTDEPVGEVKQKASKS) are compositionally biased toward basic and acidic residues.

The protein belongs to the TatA/E family. The Tat system comprises two distinct complexes: a TatABC complex, containing multiple copies of TatA, TatB and TatC subunits, and a separate TatA complex, containing only TatA subunits. Substrates initially bind to the TatABC complex, which probably triggers association of the separate TatA complex to form the active translocon.

The protein resides in the cell inner membrane. Part of the twin-arginine translocation (Tat) system that transports large folded proteins containing a characteristic twin-arginine motif in their signal peptide across membranes. TatA could form the protein-conducting channel of the Tat system. The protein is Sec-independent protein translocase protein TatA of Chelativorans sp. (strain BNC1).